A 292-amino-acid chain; its full sequence is MSYIPFPDISPELFSIELFGVTFALRWYALAYIAGLLIGWRLVLRMIRAERLWSFGPPMTEDQLERLLTWVILGVILGGRLGFVLFYQPAHYLAHPLDILKVWEGGMSFHGGFLGVMTALVAFCLKERISILPVADLLAAATPPGLFLGRIANFINAELWGRPTTLPWGVAFPGEAAQSCPGIEGICARHPSQIYEAGLEGILLFAVLSLLVWRRGWLHWPGSVSGMFLAGYGATRFLVEFVRQPDAQFVSAGNPLGLAWQISGYGLTMGQILSLPMILLGLYLILRSRRTA.

Transmembrane regions (helical) follow at residues 18–38 (LFGV…GLLI), 67–87 (LLTW…VLFY), and 105–125 (GGMS…AFCL). R150 provides a ligand contact to a 1,2-diacyl-sn-glycero-3-phospho-(1'-sn-glycerol). 3 consecutive transmembrane segments (helical) span residues 193–213 (QIYE…LLVW), 222–242 (GSVS…VEFV), and 266–286 (GLTM…YLIL).

Belongs to the Lgt family.

It localises to the cell inner membrane. It carries out the reaction L-cysteinyl-[prolipoprotein] + a 1,2-diacyl-sn-glycero-3-phospho-(1'-sn-glycerol) = an S-1,2-diacyl-sn-glyceryl-L-cysteinyl-[prolipoprotein] + sn-glycerol 1-phosphate + H(+). The protein operates within protein modification; lipoprotein biosynthesis (diacylglyceryl transfer). Catalyzes the transfer of the diacylglyceryl group from phosphatidylglycerol to the sulfhydryl group of the N-terminal cysteine of a prolipoprotein, the first step in the formation of mature lipoproteins. This is Phosphatidylglycerol--prolipoprotein diacylglyceryl transferase from Cereibacter sphaeroides (strain ATCC 17029 / ATH 2.4.9) (Rhodobacter sphaeroides).